The following is a 428-amino-acid chain: Dihydroorotase (428 aa).

Zn(2+)-binding residues include histidine 60 and histidine 62. Substrate is bound by residues 62 to 64 (HLR) and asparagine 94. Zn(2+)-binding residues include aspartate 152, histidine 179, and histidine 232. Asparagine 278 contacts substrate. Residue aspartate 305 participates in Zn(2+) binding. Aspartate 305 is an active-site residue. Substrate contacts are provided by residues histidine 309 and 323 to 324 (FG).

The protein belongs to the metallo-dependent hydrolases superfamily. DHOase family. Class I DHOase subfamily. It depends on Zn(2+) as a cofactor.

It catalyses the reaction (S)-dihydroorotate + H2O = N-carbamoyl-L-aspartate + H(+). It participates in pyrimidine metabolism; UMP biosynthesis via de novo pathway; (S)-dihydroorotate from bicarbonate: step 3/3. Catalyzes the reversible cyclization of carbamoyl aspartate to dihydroorotate. The polypeptide is Dihydroorotase (Anoxybacillus flavithermus (strain DSM 21510 / WK1)).